The primary structure comprises 267 residues: Heme-containing CO-sensing transcriptional regulator RcoM 1 (267 aa).

Residues 15 to 86 enclose the PAS domain; the sequence is RAETFQHKLE…KSRDKLRFLL (72 aa). Residues His-74 and Met-104 each coordinate heme. An HTH LytTR-type domain is found at 161 to 266; it reads IPVYRKNRVI…TAQLKELLGV (106 aa).

The cofactor is heme.

The protein resides in the cytoplasm. One-component, b-type heme-containing aerobic sensor and transcriptional regulator that responds to CO by activating the expression of the oxidation operon cox. In Paraburkholderia xenovorans (strain LB400), this protein is Heme-containing CO-sensing transcriptional regulator RcoM 1 (rcoM1).